The sequence spans 486 residues: Regulatory protein ViaA (486 aa).

Belongs to the ViaA family. In terms of assembly, homodimer. Interacts with RavA.

The protein localises to the cytoplasm. Functionally, component of the RavA-ViaA chaperone complex, which may act on the membrane to optimize the function of some of the respiratory chains. ViaA stimulates the ATPase activity of RavA. The protein is Regulatory protein ViaA of Erwinia tasmaniensis (strain DSM 17950 / CFBP 7177 / CIP 109463 / NCPPB 4357 / Et1/99).